Consider the following 444-residue polypeptide: Probable kynurenine--oxoglutarate transaminase BNA3 (444 aa).

K271 carries the N6-(pyridoxal phosphate)lysine modification.

It belongs to the class-I pyridoxal-phosphate-dependent aminotransferase family. In terms of assembly, homodimer. Pyridoxal 5'-phosphate serves as cofactor.

It localises to the cytoplasm. It is found in the mitochondrion. It catalyses the reaction L-kynurenine + 2-oxoglutarate = kynurenate + L-glutamate + H2O. Its pathway is amino-acid degradation; L-kynurenine degradation; kynurenate from L-kynurenine: step 1/2. In terms of biological role, catalyzes the irreversible transamination of the L-tryptophan metabolite L-kynurenine to form kynurenic acid (KA). The protein is Probable kynurenine--oxoglutarate transaminase BNA3 (BNA3) of Saccharomyces cerevisiae (strain ATCC 204508 / S288c) (Baker's yeast).